Reading from the N-terminus, the 738-residue chain is Prolyl oligopeptidase A (738 aa).

Catalysis depends on charge relay system residues S581, D665, and H701.

Belongs to the peptidase S9A family. In terms of assembly, monomer.

It carries out the reaction Hydrolysis of Pro-|-Xaa &gt;&gt; Ala-|-Xaa in oligopeptides.. Functionally, housekeeping prolyl oligopeptidase (POP) that behaves like a conventional POP by cleaving peptide bonds on the C-terminal side of prolyl residues within peptides that are up to approximately 30 amino acids long. This chain is Prolyl oligopeptidase A, found in Galerina marginata (strain CBS 339.88).